The chain runs to 279 residues: Shikimate dehydrogenase (NADP(+)) (279 aa).

Residues 18–20 (SRS) and Thr64 each bind shikimate. Lys68 acts as the Proton acceptor in catalysis. Glu80 is an NADP(+) binding site. Residues Asn89 and Asp104 each coordinate shikimate. Residues 129–133 (GAGGA), 153–158 (NRTVSR), and Ile218 contribute to the NADP(+) site. Residue Tyr220 coordinates shikimate. Gly241 contacts NADP(+).

This sequence belongs to the shikimate dehydrogenase family. Homodimer.

The catalysed reaction is shikimate + NADP(+) = 3-dehydroshikimate + NADPH + H(+). It participates in metabolic intermediate biosynthesis; chorismate biosynthesis; chorismate from D-erythrose 4-phosphate and phosphoenolpyruvate: step 4/7. In terms of biological role, involved in the biosynthesis of the chorismate, which leads to the biosynthesis of aromatic amino acids. Catalyzes the reversible NADPH linked reduction of 3-dehydroshikimate (DHSA) to yield shikimate (SA). This Chelativorans sp. (strain BNC1) protein is Shikimate dehydrogenase (NADP(+)).